Consider the following 209-residue polypeptide: Lysine-rich arabinogalactan protein 18 (209 aa).

Positions Met-1–Gly-21 are cleaved as a signal peptide. Residues Gly-21 to Ala-185 are disordered. Positions Ser-23–Ser-79 are enriched in low complexity. Pro residues-rich tracts occupy residues Ser-80 to Ala-95 and Ser-103 to Val-119. Over residues Ser-132–Gln-145 the composition is skewed to basic residues. Positions Ala-149–Ser-164 are enriched in pro residues. Gly-183 is lipidated: GPI-anchor amidated glycine. The propeptide at Ala-184–Phe-209 is removed in mature form.

It belongs to the lysine-rich AGP family. Post-translationally, O-glycosylated on the hydroxyproline residues. In terms of tissue distribution, predominantly expressed in flowers, and moderately expressed in roots, stems and young leaves.

It is found in the cell membrane. In terms of biological role, proteoglycan that seems to be implicated in diverse developmental roles such as differentiation, cell-cell recognition, embryogenesis and programmed cell death. This chain is Lysine-rich arabinogalactan protein 18 (AGP18), found in Arabidopsis thaliana (Mouse-ear cress).